Reading from the N-terminus, the 150-residue chain is Phosphopantetheine adenylyltransferase (150 aa).

A substrate-binding site is contributed by Thr-9. ATP-binding positions include 9 to 10 (TF) and His-17. Substrate-binding residues include Lys-41, Thr-73, and Arg-87. ATP is bound by residues 88-90 (GIR), Glu-98, and 122-128 (LTCVSST).

It belongs to the bacterial CoaD family. As to quaternary structure, homohexamer. Mg(2+) serves as cofactor.

The protein localises to the cytoplasm. It carries out the reaction (R)-4'-phosphopantetheine + ATP + H(+) = 3'-dephospho-CoA + diphosphate. The protein operates within cofactor biosynthesis; coenzyme A biosynthesis; CoA from (R)-pantothenate: step 4/5. Functionally, reversibly transfers an adenylyl group from ATP to 4'-phosphopantetheine, yielding dephospho-CoA (dPCoA) and pyrophosphate. The protein is Phosphopantetheine adenylyltransferase of Bacteroides fragilis (strain ATCC 25285 / DSM 2151 / CCUG 4856 / JCM 11019 / LMG 10263 / NCTC 9343 / Onslow / VPI 2553 / EN-2).